Reading from the N-terminus, the 628-residue chain is 1,4-alpha-glucan branching enzyme GlgB (628 aa).

The active-site Nucleophile is the Asp-304. The active-site Proton donor is Glu-355.

It belongs to the glycosyl hydrolase 13 family. GlgB subfamily. As to quaternary structure, monomer.

It carries out the reaction Transfers a segment of a (1-&gt;4)-alpha-D-glucan chain to a primary hydroxy group in a similar glucan chain.. It functions in the pathway glycan biosynthesis; glycogen biosynthesis. Its function is as follows. Catalyzes the formation of the alpha-1,6-glucosidic linkages in glycogen by scission of a 1,4-alpha-linked oligosaccharide from growing alpha-1,4-glucan chains and the subsequent attachment of the oligosaccharide to the alpha-1,6 position. The protein is 1,4-alpha-glucan branching enzyme GlgB of Streptococcus mutans serotype c (strain ATCC 700610 / UA159).